A 159-amino-acid polypeptide reads, in one-letter code: NADH-quinone oxidoreductase subunit B (159 aa).

[4Fe-4S] cluster is bound by residues cysteine 36, cysteine 37, cysteine 102, and cysteine 132.

Belongs to the complex I 20 kDa subunit family. As to quaternary structure, NDH-1 is composed of 14 different subunits. Subunits NuoB, C, D, E, F, and G constitute the peripheral sector of the complex. [4Fe-4S] cluster serves as cofactor.

It is found in the cell inner membrane. It carries out the reaction a quinone + NADH + 5 H(+)(in) = a quinol + NAD(+) + 4 H(+)(out). Its function is as follows. NDH-1 shuttles electrons from NADH, via FMN and iron-sulfur (Fe-S) centers, to quinones in the respiratory chain. Couples the redox reaction to proton translocation (for every two electrons transferred, four hydrogen ions are translocated across the cytoplasmic membrane), and thus conserves the redox energy in a proton gradient. The protein is NADH-quinone oxidoreductase subunit B of Albidiferax ferrireducens (strain ATCC BAA-621 / DSM 15236 / T118) (Rhodoferax ferrireducens).